Consider the following 316-residue polypeptide: Thioredoxin reductase (316 aa).

36–43 (ERGIPGGQ) provides a ligand contact to FAD. Residues Cys135 and Cys138 are joined by a disulfide bond. 278-287 (DIREKSLRQI) is a binding site for FAD.

Belongs to the class-II pyridine nucleotide-disulfide oxidoreductase family. Homodimer. Requires FAD as cofactor.

Its subcellular location is the cytoplasm. It carries out the reaction [thioredoxin]-dithiol + NADP(+) = [thioredoxin]-disulfide + NADPH + H(+). The chain is Thioredoxin reductase (trxB) from Bacillus subtilis (strain 168).